The primary structure comprises 132 residues: Large-conductance mechanosensitive channel (132 aa).

Transmembrane regions (helical) follow at residues 14 to 34 (VIDLAVGVVIGAAFGKIVSSL) and 67 to 87 (GNFIQTIFDFLIIAAAIFMFV).

It belongs to the MscL family. In terms of assembly, homopentamer.

It localises to the cell membrane. Channel that opens in response to stretch forces in the membrane lipid bilayer. May participate in the regulation of osmotic pressure changes within the cell. In Bacillus anthracis (strain A0248), this protein is Large-conductance mechanosensitive channel.